A 356-amino-acid chain; its full sequence is Peptide chain release factor 1 (356 aa).

Position 234 is an N5-methylglutamine (Gln234).

It belongs to the prokaryotic/mitochondrial release factor family. In terms of processing, methylated by PrmC. Methylation increases the termination efficiency of RF1.

The protein localises to the cytoplasm. Its function is as follows. Peptide chain release factor 1 directs the termination of translation in response to the peptide chain termination codons UAG and UAA. The polypeptide is Peptide chain release factor 1 (Exiguobacterium sp. (strain ATCC BAA-1283 / AT1b)).